A 497-amino-acid polypeptide reads, in one-letter code: G protein-coupled receptor gprM (497 aa).

Asparagine 3 carries an N-linked (GlcNAc...) asparagine glycan. 5 helical membrane passes run 66 to 86 (ISVAILPLCIFLLVSYAVLPV), 98 to 118 (FTLGICFMEASKIAFIIPLGV), 138 to 158 (CAFTGSLLLLGGWMVVVWSFL), 179 to 199 (WGALIFGWVVPAVGLTVMLIL), and 221 to 241 (YWIPIISFAVAALILQLATMA). An N-linked (GlcNAc...) asparagine glycan is attached at asparagine 259. The next 2 helical transmembrane spans lie at 293–313 (VTLVLIIIANVIFFSVTFIEL) and 357–377 (LLLAVLVLLSLVGFWNFILFA). Residue asparagine 421 is glycosylated (N-linked (GlcNAc...) asparagine). The interval 428 to 497 (YKSPSPMVRS…APAVYREYDD (70 aa)) is disordered.

Belongs to the G-protein coupled receptor GPR1/git3 family. Interacts with gpaA.

Its subcellular location is the cell membrane. G protein-coupled receptor that plays a role in conidiation and regulation of the biosynthesis of secondary metabolites such as dihydroxynaphthalene (DHN)-melanin, via interaction with the G-protein complex alpha subunit gpaA. The sequence is that of G protein-coupled receptor gprM from Aspergillus fumigatus (strain CBS 144.89 / FGSC A1163 / CEA10) (Neosartorya fumigata).